The chain runs to 181 residues: Acireductone dioxygenase (181 aa).

Residues His98, His100, Glu104, and His142 each coordinate Fe(2+). Residues His98, His100, Glu104, and His142 each contribute to the Ni(2+) site.

The protein belongs to the acireductone dioxygenase (ARD) family. As to quaternary structure, monomer. The cofactor is Fe(2+). It depends on Ni(2+) as a cofactor.

The catalysed reaction is 1,2-dihydroxy-5-(methylsulfanyl)pent-1-en-3-one + O2 = 3-(methylsulfanyl)propanoate + CO + formate + 2 H(+). The enzyme catalyses 1,2-dihydroxy-5-(methylsulfanyl)pent-1-en-3-one + O2 = 4-methylsulfanyl-2-oxobutanoate + formate + 2 H(+). It participates in amino-acid biosynthesis; L-methionine biosynthesis via salvage pathway; L-methionine from S-methyl-5-thio-alpha-D-ribose 1-phosphate: step 5/6. Catalyzes 2 different reactions between oxygen and the acireductone 1,2-dihydroxy-3-keto-5-methylthiopentene (DHK-MTPene) depending upon the metal bound in the active site. Fe-containing acireductone dioxygenase (Fe-ARD) produces formate and 2-keto-4-methylthiobutyrate (KMTB), the alpha-ketoacid precursor of methionine in the methionine recycle pathway. Ni-containing acireductone dioxygenase (Ni-ARD) produces methylthiopropionate, carbon monoxide and formate, and does not lie on the methionine recycle pathway. This chain is Acireductone dioxygenase, found in Synechococcus sp. (strain ATCC 27144 / PCC 6301 / SAUG 1402/1) (Anacystis nidulans).